Here is a 426-residue protein sequence, read N- to C-terminus: Trophoblast glycoprotein (426 aa).

The signal sequence occupies residues 1-31 (MPGAGSRGPSAGDGRLRLARLALVLLGWVSA). Over 32-361 (SAPSSSVPSS…AVLPQSLQTS (330 aa)) the chain is Extracellular. Over residues 33 to 47 (APSSSVPSSSTSPAA) the composition is skewed to low complexity. Positions 33 to 53 (APSSSVPSSSTSPAAFLASGS) are disordered. Residues 53–91 (SAQPPPAERCPAACECSEAARTVKCVNRNLLEVPADLPP) enclose the LRRNT domain. 2 cysteine pairs are disulfide-bonded: Cys-62-Cys-68 and Cys-66-Cys-77. LRR repeat units follow at residues 92–113 (YVRN…AFAR), 116–139 (PLAD…GAFE), 141–163 (LPGL…FAFA), 172–210 (PSPL…AALR), 215–238 (LRGL…LLAQ), 239–261 (LPSL…ASFR), and 262–281 (NLTH…VLHN). A glycan (N-linked (GlcNAc...) asparagine) is linked at Asn-124. The N-linked (GlcNAc...) asparagine glycan is linked to Asn-281. An LRRCT domain is found at 289–352 (GLAHVKVFLD…LNSSDLDCDA (64 aa)). 2 cysteine pairs are disulfide-bonded: Cys-304–Cys-329 and Cys-306–Cys-350. The helical transmembrane segment at 362-382 (YVFLGIVLALIGAIFLLVLYL) threads the bilayer. At 383–426 (NRKGIKKWMHNIRDACRDHMEGYHYRYEINADPRLTNLSSNSDV) the chain is on the cytoplasmic side. Ser-424 carries the phosphoserine modification.

In terms of processing, highly glycosylated. Highly expressed in embryo and placenta. In adult, expressed only in brain and ovary. Not detected in kidney small intestine, heart, spleen, testis, liver, lung, thymus and stomach.

The protein resides in the cell membrane. Its function is as follows. May function as an inhibitor of Wnt/beta-catenin signaling by indirectly interacting with LRP6 and blocking Wnt3a-dependent LRP6 internalization. The chain is Trophoblast glycoprotein (Tpbg) from Mus musculus (Mouse).